The chain runs to 209 residues: Na(+)-translocating NADH-quinone reductase subunit D (209 aa).

5 consecutive transmembrane segments (helical) span residues 42-62, 66-86, 103-123, 131-151, and 178-198; these read LVMT…ISLI, IPGS…VIVV, VFVG…AYAM, FMDG…VGFL, and NGLF…IWGL.

Belongs to the NqrDE/RnfAE family. As to quaternary structure, composed of six subunits; NqrA, NqrB, NqrC, NqrD, NqrE and NqrF.

It localises to the cell inner membrane. It carries out the reaction a ubiquinone + n Na(+)(in) + NADH + H(+) = a ubiquinol + n Na(+)(out) + NAD(+). Functionally, NQR complex catalyzes the reduction of ubiquinone-1 to ubiquinol by two successive reactions, coupled with the transport of Na(+) ions from the cytoplasm to the periplasm. NqrA to NqrE are probably involved in the second step, the conversion of ubisemiquinone to ubiquinol. The protein is Na(+)-translocating NADH-quinone reductase subunit D of Proteus mirabilis (strain HI4320).